The sequence spans 1724 residues: Protein scribble homolog (1724 aa).

The tract at residues 1–821 (MLKCIPLWRC…MTVLRERMVE (821 aa)) is sufficient for targeting to adherens junction. 17 LRR repeats span residues 11–34 (NRHV…IYRY), 35–58 (NRSL…FFRL), 59–81 (HNLR…VANF), 83–105 (QLVE…KFCQ), 107–127 (LEIA…FTQL), 128–150 (RGLA…IGNL), 151–174 (SNLV…SFLV), 176–196 (LEQL…LGAL), 197–219 (PNLR…LGNL), 221–242 (QLVC…ISGL), 244–265 (ALTD…IGSL), 266–288 (KKLS…IGEC), 289–311 (ENLT…LGKL), 312–334 (KKLT…LGGC), 336–357 (SLNV…LANA), 359–380 (ELHV…LANL), and 382–405 (LKAM…DDEQ). 3 disordered regions span residues 451 to 484 (RDDS…LKVM), 496 to 620 (YTAR…RKDT), and 646 to 683 (SHDG…HTPF). The segment covering 518 to 534 (SNQSHDSQASSSTTSAT) has biased composition (low complexity). Residues 554-567 (VQEEEDLDEMEVEY) show a composition bias toward acidic residues. Over residues 574–583 (FAEEPIIRGG) the composition is skewed to basic and acidic residues. Over residues 584–598 (DEDDDYDNDDDDAER) the composition is skewed to acidic residues. Residues 611-620 (EKQRLIRKDT) show a composition bias toward basic and acidic residues. Residues 661–678 (RDGEDDEEEEEDEDEEDD) show a composition bias toward acidic residues. PDZ domains are found at residues 731-818 (TLSI…LRER), 867-955 (ATCL…DREQ), 1005-1094 (EVTL…RRDP), and 1101-1193 (EIVI…CDGF). A disordered region spans residues 955-995 (QSSVGGASPRTRPHSPPPPEPSDSPEQEDGGDEHLGNHLNC). Disordered regions lie at residues 1283–1407 (LQKV…DRQK), 1414–1433 (KQQT…EDDL), 1449–1468 (REFM…AKQV), and 1488–1555 (SLGS…GESA). Residues 1295–1306 (FRIDSPVRDAAH) are compositionally biased toward basic and acidic residues. Polar residues-rich tracts occupy residues 1308–1329 (PHNS…NAST), 1346–1357 (PASQDGHSSPNP), and 1364–1385 (PINS…KQPS). Over residues 1395 to 1407 (HSPEQRSFKDRQK) the composition is skewed to basic and acidic residues. A coiled-coil region spans residues 1430 to 1461 (EDDLKKMKEEEAKRIEQRAREFMLDEDEEEEE). Over residues 1453–1463 (LDEDEEEEEED) the composition is skewed to acidic residues. The segment covering 1490 to 1506 (GSPTSRQCATPPNYSAT) has biased composition (polar residues). The span at 1507–1518 (PPSHCGSSGPSS) shows a compositional bias: low complexity. Basic and acidic residues predominate over residues 1521-1538 (GKGDSQRNSVEDSFRLEQ). A Phosphoserine modification is found at Ser-1609. Residues 1621–1684 (IAKSKEGKKR…FMDESSSNAV (64 aa)) form a disordered region. A compositionally biased stretch (basic and acidic residues) spans 1623–1632 (KSKEGKKRGT).

Post-translationally, palmitoylated.

It localises to the cell membrane. Its subcellular location is the cell junction. The protein localises to the adherens junction. The protein resides in the cell projection. It is found in the lamellipodium. It localises to the cytoplasm. Its subcellular location is the postsynapse. The protein localises to the presynapse. Its function is as follows. Scaffold protein involved in different aspects of polarized cells differentiation regulating epithelial and neuronal morphogenesis. Regulates the caudal migration of the nVII motor neurons. Required for convergent extension movements during gastrulation. The sequence is that of Protein scribble homolog (scrib) from Danio rerio (Zebrafish).